We begin with the raw amino-acid sequence, 79 residues long: RNA-binding protein KhpA (79 aa).

The KH domain maps to 32-79 (TVVIELRVDPAELGKVIGKQGRIARALRTILTAIGRKIGKRVVLEILE).

Belongs to the KhpA RNA-binding protein family.

The protein localises to the cytoplasm. Functionally, a probable RNA-binding protein. The protein is RNA-binding protein KhpA of Aquifex aeolicus (strain VF5).